Reading from the N-terminus, the 717-residue chain is MQSTTNYLWHTDDLLGQGATASVYKARNKKSGEVVAVKVFNSASYRRPPEVQVREFEVLRRLNHQNIVKLFAVEETGGSRQKVLIMEYCSSGSLLSVLEDPENTFGLSEEEFLVVLRCVVAGMNHLRENGIVHRDIKPGNIMRLVGEEGQSIYKLSDFGAARKLDDDEKFVSVYGTEEYLHPDMYERAVLRKPQQKAFGVTVDLWSIGVTLYHAATGSLPFIPFGGPRRNKEIMYRITTEKPAGAISGTQKQENGPLEWSYSLPITCRLSMGLQNQLVPILANILEVEEDKCWGFDQFFAETSDILQRTVIHVFSLPQAVLHHVYIHAHNTIAIFLEAVYEQTNVTPKHQEYLFEGHPCVLEPSLSAQHIAHTAASSPLTLFSMSSDTPKGLAFRDPALDVPKFVPKVDLQADYSTAKGVLGAGYQALWLARVLLDGQALMLRGLHWVLEVLQDTCQQTLEVTRTALLYLSSSLGTERFSSGAGMPDVQERKEATELRTRLQTLSEILSKCSHNVTETQRSLSCLGEELLKNRDQIHEDNKSIQKIQCCLDKMHFIYKQFKKSRMRPGLSYNEEQIHKLDKVNFSHLAKRLLQVFQEECVQTYQVSLVTHGKRMRQVQRAQNHLHLIGHSVATCNSEARGAQESLNKIFDQLLLDRASEQGAEVSPQPMAPHPGPDPKDLVFHMQELCNDMKLLAFDLQDNNRLIERLHRVPSAPDV.

The region spanning 9 to 315 is the Protein kinase domain; that stretch reads WHTDDLLGQG…LQRTVIHVFS (307 aa). 15-23 lines the ATP pocket; it reads LGQGATASV. Lysine 30 is covalently cross-linked (Glycyl lysine isopeptide (Lys-Gly) (interchain with G-Cter in ubiquitin)). An ATP-binding site is contributed by lysine 38. Aspartate 135 (proton acceptor) is an active-site residue. Serine 172 is subject to Phosphoserine; by autocatalysis and IKKB. Residue lysine 231 forms a Glycyl lysine isopeptide (Lys-Gly) (interchain with G-Cter in SUMO1) linkage. Residues 385-650 form an interaction with DDX3X region; the sequence is SSDTPKGLAF…AQESLNKIFD (266 aa). Lysine 403 participates in a covalent cross-link: Glycyl lysine isopeptide (Lys-Gly) (interchain with G-Cter in ubiquitin). Positions 452-473 are leucine-zipper; sequence LQDTCQQTLEVTRTALLYLSSS. The residue at position 503 (threonine 503) is a Phosphothreonine. At serine 665 the chain carries Phosphoserine.

The protein belongs to the protein kinase superfamily. Ser/Thr protein kinase family. I-kappa-B kinase subfamily. As to quaternary structure, homodimer. Interacts with MAVS/IPS1. Interacts (via protein kinase domain) with TTLL12 (via N-terminus); the interaction prevents MAVS binding to IKBKE. Interacts with the adapter proteins AZI2/NAP1, TANK and TBKBP1/SINTBAD. Interacts with SIKE1. Interacts with TICAM1/TRIF, IRF3 and RIGI; interactions are disrupted by the interaction between IKBKE and SIKE1. Interacts with TOPORS; induced by DNA damage. Interacts with CYLD, IKBKB, IKBKG and MYD88. Interacts with IFIH1. Interacts with DDX3X; the interaction may be induced upon virus infection. Interacts with TRIM6 (via SPRY box). Interacts with unanchored K48-linked polyubiquitin chains; this leads to IKBKE activation. Interacts with TBK1. Interacts with FKBP5. Sumoylation by TOPORS upon DNA damage is required for protection of cells against DNA damage-induced cell death. Desumoylated by SENP1. Post-translationally, autophosphorylated and phosphorylated by IKBKB/IKKB. Phosphorylation at Ser-172 is enhanced by the interaction with DDX3X. Phosphorylated at Thr-503 upon IFN activation. In terms of processing, 'Lys-63'-linked polyubiquitinated at Lys-30 and Lys-403 by TRAF2:BIRC2 and TRAF2:BIRC3 complexes. Ubiquitination is induced by LPS, TNFA and interleukin-1 and required for full kinase activity and KF-kappa-B pathway activation. Expressed in bone marrow-derived macrophages and at low levels in liver and white adipose tissue (at protein level). Detected in muscle and lung.

It is found in the cytoplasm. The protein resides in the nucleus. It localises to the PML body. The catalysed reaction is L-seryl-[I-kappa-B protein] + ATP = O-phospho-L-seryl-[I-kappa-B protein] + ADP + H(+). Kinase activity is inhibited competitively by amlexanox. Functionally, serine/threonine kinase that plays an essential role in regulating inflammatory responses to viral infection, through the activation of the type I IFN, NF-kappa-B and STAT signaling. Also involved in TNFA and inflammatory cytokines, like Interleukin-1, signaling. Following activation of viral RNA sensors, such as RIG-I-like receptors, associates with DDX3X and phosphorylates interferon regulatory factors (IRFs), IRF3 and IRF7, as well as DDX3X. This activity allows subsequent homodimerization and nuclear translocation of the IRF3 leading to transcriptional activation of pro-inflammatory and antiviral genes including IFNB. In order to establish such an antiviral state, IKBKE forms several different complexes whose composition depends on the type of cell and cellular stimuli. Thus, several scaffolding molecules including IPS1/MAVS, TANK, AZI2/NAP1 or TBKBP1/SINTBAD can be recruited to the IKBKE-containing-complexes. Activated by polyubiquitination in response to TNFA and interleukin-1, regulates the NF-kappa-B signaling pathway through, at least, the phosphorylation of CYLD. Phosphorylates inhibitors of NF-kappa-B thus leading to the dissociation of the inhibitor/NF-kappa-B complex and ultimately the degradation of the inhibitor. In addition, is also required for the induction of a subset of ISGs which displays antiviral activity, may be through the phosphorylation of STAT1 at 'Ser-708'. Phosphorylation of STAT1 at 'Ser-708' also seems to promote the assembly and DNA binding of ISGF3 (STAT1:STAT2:IRF9) complexes compared to GAF (STAT1:STAT1) complexes, in this way regulating the balance between type I and type II IFN responses. Protects cells against DNA damage-induced cell death. Also plays an important role in energy balance regulation by sustaining a state of chronic, low-grade inflammation in obesity, wich leads to a negative impact on insulin sensitivity. Phosphorylates AKT1. The polypeptide is Inhibitor of nuclear factor kappa-B kinase subunit epsilon (Ikbke) (Mus musculus (Mouse)).